The chain runs to 417 residues: MKAEIISVGTELLLGQITDTNRPYIARALHDMGIESYHQSIVGGNAADILTTLRLAAHRSDLIILIGGLGPAVDDLTKQVVSQFINSSLIPDTEALRKLKKWHDAVDVEMADNNYRQVLFLEQGKPLKNDFGFAVGSFYQSNDGPDFLLMPGPPWEMVPMFDHYVVPLLERQYLHGQVLNSLVMRYFGIGESRLSQLISDLMISQTNPTMTTDAKKHEVTIRLTSKASSEALAENLNQKAAAKINTLVGDYFYGYGAHNSLEKVVANLLEENQQTIAMTEVFTRGLVQSTLQNALSQTETLAGGFNGMSALLDLTDDEIELSGDNGAQLVSRLAQLTQQRLGADIGLAILAETPESNGQHDYVNEKVWFGLVSHQERLLVTSQSFAKDHQDNVEDAIFVALDLIRRHLSQQNLVDRA.

The protein belongs to the CinA family.

This Leuconostoc citreum (strain KM20) protein is Putative competence-damage inducible protein.